The chain runs to 1372 residues: MSVVNFYGQLSNTQQFDQIRINIASPDQVRSWSFGEVTKPETINYRTFKPEKDGLFCARIFGPVKDYECLCGKYKRMKNRGITCEKCGVEVTVSRVRRERMGHIELAAPVAHIWFLKSLPSRISTLLDMTMRDVEKILYFENYVVVDPGLSILQKGELLTEEELQKAKDKYGEDAFTASIGAEVIQQMLKELDFSKLKQELYEELQTTSSEVKKKKLVKRLKLVENFLESENKPEWMIMDVLPVIPPEIRPLVMLDGGRFATSDLNELYRRVINRNNRLKKLIESKAPDIIVRNEKRMLQEAVDALFDNGRRGRAAKNANKRPFKSLSDMLKGKQGRFRQNLLGKRVDYSGRSVIVVGPELKLHQCGLPKKMALELFKPFIYSKLELYGIATTIKAAKRMVEAEKSEVWDVLEEVIREHPVLLNRAPTLHRLGIQAFEPLLIEGKAIQLHPLVCAAFNADFDGDQMAVHIPLSIEAQLEARVFMMSTNNILSPANGRPIIVPDKDIVLGLYYLTLAFDNEVGAGMMFSDLAEMEHALYNKFITIHTKIKYRRNQLNAEGKMVPVIIDTTYGRLMVGELLPSNPNIEFKFINKQLTKKDISLVIDLVYRHCGQKATVIFADQLMKLGFKYACSSGISFGMDDMVVPESKSTHINKTQLEIKEFEQQYSNGLITYGEKYNKVVDAWSRCTDRVANDMMKEIATLPVNDAPNHQKINAIYMMAISGARGSFQQIKQLGGMRGLMTKSNGQIIQTPIISNFKEGLTEFECFNSANGMRKGQIDTALKTASSGYLTRKLVDVAQDCIITEKDCGTDKGIEVKSVIEGGEVIVPLAEKILGRTAAIDIFHPVTNDLILNKGELINEAKLEQIESAGLDRIMIKSVLTCESTTGICSICYGRDLATGTLVSEGEAIGVIAAQSIGEPGTQLTMRTFHIGGAATKGAEVSSVDASYDAKVKIISRNVVINSEERKIVMSRNCELLLLDNHGNEKARHKIPYGARLLVDDGDMVIKTQKLAEWDPYTIPIITEKSGKVLFKDMVEGISIRDVTDEATGIPSKVIIESKQYSRGAELRPRIQLLDAKGEVITLSNGLEARYYLPVGAVLSVEDGVQISVGDIIARIPKESTTTKDITGGLPRVAELVEARRPKDHAVIAEIDGRVEFGKDYKSKRRIIIHPIDETMSIEYMVPKGKHVVVNEGDFVKKGDLLIDGNPVLQDILKVMGVEVLANYIVNEVQAVYRLQGVKIDDKHIEVIIRQMLQKVEVTDSGGTTLLAGEKIDRHEFDEINEKAIKNGLKPAEAQLILQGITKASLQTRSFISAASFQETTRVLTEAAIAGKVDKLRGLKENVIVGRLVPAGTGYFMDKMRKAAVKLDEENV.

Zn(2+)-binding residues include Cys69, Cys71, Cys84, and Cys87. Positions 460, 462, and 464 each coordinate Mg(2+). Residues Cys808, Cys882, Cys889, and Cys892 each contribute to the Zn(2+) site.

Belongs to the RNA polymerase beta' chain family. As to quaternary structure, the RNAP catalytic core consists of 2 alpha, 1 beta, 1 beta' and 1 omega subunit. When a sigma factor is associated with the core the holoenzyme is formed, which can initiate transcription. Requires Mg(2+) as cofactor. It depends on Zn(2+) as a cofactor.

The catalysed reaction is RNA(n) + a ribonucleoside 5'-triphosphate = RNA(n+1) + diphosphate. In terms of biological role, DNA-dependent RNA polymerase catalyzes the transcription of DNA into RNA using the four ribonucleoside triphosphates as substrates. In Rickettsia rickettsii (strain Iowa), this protein is DNA-directed RNA polymerase subunit beta'.